The sequence spans 118 residues: Protein MT2260 (118 aa).

Belongs to the HesB/IscA family.

The chain is Protein MT2260 from Mycobacterium tuberculosis (strain CDC 1551 / Oshkosh).